The chain runs to 242 residues: MGIKKEDQKSSLSLLTQRWNNPRIVRVSRAFGGKDRHSKVCTVRGLRDRRIRLSVMTAIQVYDLQERLGLSQPSKVIDWLLEVAKNDVDLLPPLQFPPGFHQLNPNLTGLGESFPGVFDLGRTQREALDLEKRKWVNLDHVFDHIDHHNHFSNSIQSNKLYFPTITSSSSSYHYNLGHLQQSLLDQSGNVTVAFSNNYNNNNLNPPAAETMSSLFPTRYPSFLGGGQLQLFSSTSSQPDHIE.

Positions 33–91 (GKDRHSKVCTVRGLRDRRIRLSVMTAIQVYDLQERLGLSQPSKVIDWLLEVAKNDVDLL) constitute a TCP domain.

Interacts with SPL. In terms of tissue distribution, expressed in cotyledons, particularly in the vascular region, in leaves, roots, stems, buds, flowers and siliques.

Its subcellular location is the nucleus. Functionally, plays a pivotal role in the control of morphogenesis of shoot organs by negatively regulating the expression of boundary-specific genes such as CUC genes, probably through the induction of miRNA (e.g. miR164). Participates in ovule development. The protein is Transcription factor TCP17 (TCP17) of Arabidopsis thaliana (Mouse-ear cress).